The following is a 773-amino-acid chain: Leucine-rich repeat-containing protein let-4 (773 aa).

The N-terminal stretch at 1 to 20 (MRLLLCLLLFSTLLINSTNA) is a signal peptide. The Extracellular segment spans residues 21–689 (CPGVITQACF…RLEKSFFTTT (669 aa)). LRR repeat units lie at residues 61–84 (VGLI…FFSG), 85–107 (LFIR…AFAG), 109–132 (NPVL…ALAG), 133–157 (LPNL…IFPN), 159–181 (NKLY…TFQN), 183–206 (KNSI…AIRG), 207–230 (LKQL…NFLN), 231–254 (LPVL…AFLN), 256–278 (PSLR…QFQT), 279–302 (FEQL…SLSG), 303–326 (LKQL…AFTN), 328–349 (SIVV…IISG), 350–373 (LPNL…AFYD), 375–397 (ASLV…TFLA), 399–421 (LNLL…AFNS), and 486–516 (LVQI…AFQQ). Residues 690-710 (IIFICVGTAVIVLVVVIAGLC) form a helical membrane-spanning segment. The Cytoplasmic segment spans residues 711-773 (ISKHRQLQFE…PGSSYCNYYK (63 aa)).

As to expression, in L1 larvae, expressed in a subset of epithelial cells including epidermal, vulval and rectal cells and the excretory duct and pore. Absent from internal epithelia such as the gut and pharyngeal tubes. Transiently expressed in the excretory canal cell at the 1.5-fold embryonic stage but no longer visible in this cell at hatching.

It localises to the apical cell membrane. Required for apical extracellular matrix organization and epithelial junction maintenance. This is Leucine-rich repeat-containing protein let-4 (let-4) from Caenorhabditis elegans.